A 320-amino-acid polypeptide reads, in one-letter code: NAC domain-containing protein 20 (320 aa).

The NAC domain occupies leucine 14 to lysine 170. A DNA-binding region spans residues isoleucine 114 to lysine 176.

As to quaternary structure, forms homodimers. Forms heterodimers with NAC26. As to expression, expressed in developing seeds.

It is found in the nucleus. The protein resides in the endoplasmic reticulum. Its function is as follows. Transcription factor that acts redundantly with NAC26 to regulate the expression of genes involved in the biosynthesis of starch and storage proteins in grain. Directly binds to the promoters of starch synthase 1 (SS1), pullulanase (PUL), glutelin A1 (GLUA1), glutelins B4 and B5 (GLUB4 and GLUB5), alpha-globulin and 16 kDa prolamin, and activates their expression. Possesses transactivation activity in yeast. The chain is NAC domain-containing protein 20 from Oryza sativa subsp. indica (Rice).